We begin with the raw amino-acid sequence, 296 residues long: Tuberculosinyl adenosine transferase (296 aa).

It belongs to the diterpene synthase family. Homodimer. Mg(2+) serves as cofactor.

It catalyses the reaction tuberculosinyl diphosphate + adenosine + H(+) = 1-tuberculosinyladenosine + diphosphate. The enzyme catalyses tuberculosinyl diphosphate + H2O = tuberculosinol + diphosphate. It carries out the reaction tuberculosinyl diphosphate + H2O = (13R)-edaxadiene + diphosphate. The catalysed reaction is tuberculosinyl diphosphate + H2O = (13S)-edaxadiene + diphosphate. Functionally, tuberculosinyl transferase that catalyzes the condensation of adenosine and tuberculosinyl diphosphate (TbPP) to generate 1-tuberculosinyladenosine (1-TbAd), which acts as an antiacid that directly protects M.tuberculosis from acid pH and physically remodels M.tuberculosis phagolysosomes. In addition, acts as a phosphatase that catalyzes the diphosphate-removal from TbPP to produce both tuberculosinol (TOH) and isotuberculosinol (iso-TOH). This chain is Tuberculosinyl adenosine transferase, found in Mycobacterium tuberculosis (strain CDC 1551 / Oshkosh).